The chain runs to 498 residues: UDP-N-acetylmuramoylalanine--D-glutamate ligase (498 aa).

119-125 (GTNGKST) is a binding site for ATP.

Belongs to the MurCDEF family.

It is found in the cytoplasm. It catalyses the reaction UDP-N-acetyl-alpha-D-muramoyl-L-alanine + D-glutamate + ATP = UDP-N-acetyl-alpha-D-muramoyl-L-alanyl-D-glutamate + ADP + phosphate + H(+). It functions in the pathway cell wall biogenesis; peptidoglycan biosynthesis. In terms of biological role, cell wall formation. Catalyzes the addition of glutamate to the nucleotide precursor UDP-N-acetylmuramoyl-L-alanine (UMA). The protein is UDP-N-acetylmuramoylalanine--D-glutamate ligase of Wolbachia sp. subsp. Brugia malayi (strain TRS).